The sequence spans 170 residues: Protein FAM209 (170 aa).

Positions 1-20 (MRTLLRWCLFLSLCVSCACA) are cleaved as a signal peptide. The helical transmembrane segment at 56 to 76 (WLGNKWLWLFVAIMIYVMLKF) threads the bilayer. The segment at 83–107 (KEQHPPGLRGCQLRSPPKKAQNISP) is disordered.

In terms of assembly, interacts with DPY19L2. Interacts with CYLC1; the interaction may be relevant for proper acrosome attachment to the nuclear envelope. As to expression, predominately expressed in testis.

Its subcellular location is the nucleus inner membrane. Functionally, required for sperm acrosome biogenesis. The chain is Protein FAM209 from Mus musculus (Mouse).